We begin with the raw amino-acid sequence, 360 residues long: Phenylalanine--tRNA ligase alpha subunit (360 aa).

Residue Glu260 participates in Mg(2+) binding.

It belongs to the class-II aminoacyl-tRNA synthetase family. Phe-tRNA synthetase alpha subunit type 1 subfamily. In terms of assembly, tetramer of two alpha and two beta subunits. Requires Mg(2+) as cofactor.

Its subcellular location is the cytoplasm. It carries out the reaction tRNA(Phe) + L-phenylalanine + ATP = L-phenylalanyl-tRNA(Phe) + AMP + diphosphate + H(+). The protein is Phenylalanine--tRNA ligase alpha subunit of Afipia carboxidovorans (strain ATCC 49405 / DSM 1227 / KCTC 32145 / OM5) (Oligotropha carboxidovorans).